We begin with the raw amino-acid sequence, 539 residues long: M protein, serotype 24 (539 aa).

The first 42 residues, 1 to 42 (MTKNNTNRHYSLRKLKTGTASVAVALTVLGAGLVVNTNEVSA), serve as a signal peptide directing secretion. Residues 118-152 (LEARKADLEKALEGAMNFSTADSAKIKTLEAEKAA) form an A-1 repeat. The tract at residues 118–301 (LEARKADLEK…ALEAEKADLE (184 aa)) is 5.3 X 35 AA tandem repeats, A-type. One copy of the A-2 repeat lies at 153-187 (LAARKADLEKALEGAMNFSTADSAKIKTLEAEKAA). Residues 188–222 (LEARQAELEKALEGAMNFSTADSAKIKTLEAEKAA) form an A-3 repeat. Residues 223–257 (LAARKADLEKALEGAMNFSTADSAKIKTLEAEKAA) form an A-4 repeat. The A-5 repeat unit spans residues 258-292 (LEARQAELEKALEGAMNFSTADSAKIKTLEAEKAA). Residues 293–297 (LEAEK) form an A-6; truncated repeat. The tract at residues 297–401 (KADLEHQSQV…REAKKQVEKA (105 aa)) is disordered. C repeat units follow at residues 298–332 (ADLE…EAEH), 333–367 (QKLE…EAEH), and 368–402 (QKLE…EKAL). Over residues 303 to 312 (QSQVLNANRQ) the composition is skewed to polar residues. 3 stretches are compositionally biased toward basic and acidic residues: residues 314–340 (LRRD…EQNK), 349–375 (LRRD…EQNK), and 384–401 (LRRD…VEKA). 4 D repeats span residues 435 to 440 (AKLEAE), 441 to 446 (AKALKE), 449 to 454 (AKQAEE), and 456 to 461 (AKLRAG). The segment at 456 to 511 (AKLRAGKASDSQTPDAKPGNKAVPGKGQAPQAGTKPNQNKAPMKETKRQLPSTGET) is disordered. An LPXTG sorting signal motif is present at residues 505–509 (LPSTG). At Thr508 the chain carries Pentaglycyl murein peptidoglycan amidated threonine. Residues 509 to 539 (GETANPFFTAAALTVMATAGVAAVVKRKEEN) constitute a propeptide, removed by sortase.

Belongs to the M protein family.

It is found in the secreted. It localises to the cell wall. Functionally, this protein is one of the different antigenic serotypes of protein M. Protein M is closely associated with virulence of the bacterium and can render the organism resistant to phagocytosis. This is M protein, serotype 24 (emm24) from Streptococcus pyogenes.